A 310-amino-acid chain; its full sequence is Methionyl-tRNA formyltransferase (310 aa).

111–114 (SLLP) is a binding site for (6S)-5,6,7,8-tetrahydrofolate.

Belongs to the Fmt family.

The enzyme catalyses L-methionyl-tRNA(fMet) + (6R)-10-formyltetrahydrofolate = N-formyl-L-methionyl-tRNA(fMet) + (6S)-5,6,7,8-tetrahydrofolate + H(+). In terms of biological role, attaches a formyl group to the free amino group of methionyl-tRNA(fMet). The formyl group appears to play a dual role in the initiator identity of N-formylmethionyl-tRNA by promoting its recognition by IF2 and preventing the misappropriation of this tRNA by the elongation apparatus. The polypeptide is Methionyl-tRNA formyltransferase (Afipia carboxidovorans (strain ATCC 49405 / DSM 1227 / KCTC 32145 / OM5) (Oligotropha carboxidovorans)).